Here is a 428-residue protein sequence, read N- to C-terminus: Flotillin-2 (428 aa).

3 S-palmitoyl cysteine lipidation sites follow: Cys4, Cys19, and Cys20.

The protein belongs to the band 7/mec-2 family. Flotillin subfamily. As to quaternary structure, heterooligomeric complex of flotillins 1 and 2. Post-translationally, palmitoylation may be required for the formation of higher order complexes and for neurite outgrowth in cultured neural stem cells. As to expression, normally expressed in growing retinal exons of newly differentiated ganglion cells at the retinal margin. After optic nerve injury, expressed in all retinal ganglion cells and retinal axons. Also expressed in endothelial cells, spinal cord, larval and adult skin, muscle processes, thymus and gill macrophages.

It is found in the membrane. Its subcellular location is the endosome. In terms of biological role, may play a role in axon growth and regeneration. May be involved in epidermal cell adhesion and epidermal structure and function. In Carassius auratus (Goldfish), this protein is Flotillin-2 (flot2).